A 92-amino-acid chain; its full sequence is UPF0250 protein VC0395_A0469/VC395_0960 (92 aa).

It belongs to the UPF0250 family.

The protein is UPF0250 protein VC0395_A0469/VC395_0960 of Vibrio cholerae serotype O1 (strain ATCC 39541 / Classical Ogawa 395 / O395).